The chain runs to 384 residues: Deoxyguanosinetriphosphate triphosphohydrolase-like protein (384 aa).

One can recognise an HD domain in the interval 62–198 (RLTHSLEVST…AALADDISYI (137 aa)).

It belongs to the dGTPase family. Type 2 subfamily.

This Rickettsia conorii (strain ATCC VR-613 / Malish 7) protein is Deoxyguanosinetriphosphate triphosphohydrolase-like protein.